The sequence spans 851 residues: DNA mismatch repair protein MutS (851 aa).

614-621 (GPNMGGKS) contributes to the ATP binding site.

Belongs to the DNA mismatch repair MutS family.

Its function is as follows. This protein is involved in the repair of mismatches in DNA. It is possible that it carries out the mismatch recognition step. This protein has a weak ATPase activity. The chain is DNA mismatch repair protein MutS from Photorhabdus laumondii subsp. laumondii (strain DSM 15139 / CIP 105565 / TT01) (Photorhabdus luminescens subsp. laumondii).